Consider the following 3011-residue polypeptide: Chromodomain-helicase-DNA-binding protein 7 (3011 aa).

5 disordered regions span residues 90-146, 159-189, 202-422, 502-806, and 941-960; these read ISNA…SMWG, PYQQ…QHMQ, MQQH…GSAG, QQLP…VEKI, and PEME…SESS. Residues 159–168 show a composition bias toward low complexity; that stretch reads PYQQQQQQPQ. Pro residues predominate over residues 169–179; sequence PTQPPQAPSGP. Residues 203–215 are compositionally biased toward low complexity; sequence QQHGQPQQQRMNQ. Polar residues-rich tracts occupy residues 216 to 227, 241 to 258, 291 to 347, and 374 to 393; these read FSQGQEGLNQGN, VPQQ…SVQQ, QTLN…NQSV, and GSLN…QGTY. A compositionally biased stretch (low complexity) spans 502-516; the sequence is QQLPSQQQSFQQQMP. Polar residues-rich tracts occupy residues 576 to 586 and 630 to 641; these read TQVSGPNTQLV and DSQNLSRNSVDC. Composition is skewed to basic and acidic residues over residues 655–684 and 718–730; these read KKEP…EPKE and KGKE…DLDK. The segment covering 747–759 has biased composition (basic residues); it reads QKRRSSRQVKRKR. The segment covering 760–770 has biased composition (basic and acidic residues); sequence YTEDLEFKISD. The segment covering 783-795 has biased composition (polar residues); it reads SPSNTSQSEQQES. Chromo domains lie at 801–868 and 883–948; these read PVVE…GQNK and VEID…RVER. The Helicase ATP-binding domain maps to 981-1155; that stretch reads LFNWYNTRNC…FSLLHFLEPG (175 aa). Residue 994-1001 coordinates ATP; the sequence is DEMGLGKT. The short motif at 1106 to 1109 is the DEAH box element; sequence DEAH. A Helicase C-terminal domain is found at 1295–1465; that stretch reads LIDKLLPKLK…LSKKEIEDLL (171 aa). 3 disordered regions span residues 1577 to 1602, 1836 to 1869, and 2136 to 2291; these read FSDL…SQGY, GTDM…KDEI, and GTGN…GFYM. Basic and acidic residues predominate over residues 1585–1597; the sequence is EEKPSTKPRRPQD. Over residues 1845 to 1856 the composition is skewed to acidic residues; the sequence is DGGEFDREDEDP. Over residues 1857 to 1867 the composition is skewed to basic and acidic residues; it reads EYKPTRTPFKD. Positions 2136–2145 are enriched in polar residues; sequence GTGNANTVSS. 2 stretches are compositionally biased toward basic and acidic residues: residues 2166–2207 and 2218–2238; these read QEEK…KQDC and CELK…SEKG. A compositionally biased stretch (acidic residues) spans 2239–2253; the sequence is SEEDEEEKLDDDDKS. The stretch at 2403–2433 forms a coiled coil; sequence RRRRRKIEIEAERAAKRRNLMEMVAQLRESQ. The residue at position 2561 (serine 2561) is a Phosphoserine. Disordered stretches follow at residues 2825–2900 and 2946–3011; these read TTGN…LPTN and GSNE…ENDE. The segment covering 2841-2851 has biased composition (basic and acidic residues); it reads GASKAEEKKNE. Positions 2864 to 2877 are enriched in polar residues; sequence DTVSATDSANGSVS. The span at 2878-2893 shows a compositional bias: low complexity; sequence AATAATTATATTTTTT. Residues 2948-2964 show a composition bias toward basic and acidic residues; that stretch reads NEEKATDKTEGTAFKDE. Acidic residues-rich tracts occupy residues 2965 to 2974 and 2984 to 3011; these read ENLEGSDAEE and ILED…ENDE.

It belongs to the SNF2/RAD54 helicase family. As to expression, expressed in the neural epithelium, otic placodes, optic placodes, branchial arches, and the olfactory placodes,.

It is found in the nucleus. It catalyses the reaction ATP + H2O = ADP + phosphate + H(+). In terms of biological role, ATP-dependent chromatin-remodeling factor, slides nucleosomes along DNA; nucleosome sliding requires ATP.Probable transcription regulator. Maybe involved in the in 45S precursor rRNA production. This chain is Chromodomain-helicase-DNA-binding protein 7 (CHD7), found in Gallus gallus (Chicken).